Consider the following 353-residue polypeptide: Cytochrome c biogenesis protein CcsA (353 aa).

Transmembrane regions (helical) follow at residues 15–35 (FAIL…PNLP), 37–57 (LAAL…TLLG), 68–88 (LSNL…VHLI), 97–117 (LVGV…TMTL), 142–162 (VMML…AFLI), 261–281 (IIGL…VWAN), 288–308 (WSWD…AAYL), and 322–342 (AILA…VNLL).

This sequence belongs to the CcmF/CycK/Ccl1/NrfE/CcsA family. May interact with ccs1.

The protein localises to the cellular thylakoid membrane. Required during biogenesis of c-type cytochromes (cytochrome c6 and cytochrome f) at the step of heme attachment. The protein is Cytochrome c biogenesis protein CcsA of Nostoc punctiforme (strain ATCC 29133 / PCC 73102).